The primary structure comprises 153 residues: Gamma-glutamylaminecyclotransferase (153 aa).

7–10 is a binding site for substrate; that stretch reads YGTL. E82 serves as the catalytic Proton acceptor. The interval 130–153 is disordered; it reads QLPHHDSYDSEGPHGLRYNPRENR. Residues 132-153 show a composition bias toward basic and acidic residues; the sequence is PHHDSYDSEGPHGLRYNPRENR.

Belongs to the gamma-glutamylcyclotransferase family. Monomer.

The enzyme catalyses epsilon-(gamma-L-glutamyl)-L-lysine = 5-oxo-L-proline + L-lysine. Its function is as follows. Contributes to degradation of proteins cross-linked by transglutaminases by degrading the cross-link between a lysine and a glutamic acid residue. Catalyzes the formation of 5-oxo-L-proline from L-gamma-glutamyl-L-epsilon-lysine. Inactive with L-gamma-glutamyl-alpha-amino acid substrates such as L-gamma-glutamyl-L-alpha-cysteine and L-gamma-glutamyl-L-alpha-alanine. The polypeptide is Gamma-glutamylaminecyclotransferase (GGACT) (Homo sapiens (Human)).